We begin with the raw amino-acid sequence, 150 residues long: UPF0178 protein Sbal195_1808 (150 aa).

This sequence belongs to the UPF0178 family.

The chain is UPF0178 protein Sbal195_1808 from Shewanella baltica (strain OS195).